A 177-amino-acid chain; its full sequence is NADH-quinone oxidoreductase subunit B (177 aa).

Residues cysteine 36, cysteine 37, cysteine 101, and cysteine 130 each contribute to the [4Fe-4S] cluster site.

Belongs to the complex I 20 kDa subunit family. In terms of assembly, NDH-1 is composed of 14 different subunits. Subunits NuoB, C, D, E, F, and G constitute the peripheral sector of the complex. [4Fe-4S] cluster is required as a cofactor.

It is found in the cell inner membrane. The catalysed reaction is a quinone + NADH + 5 H(+)(in) = a quinol + NAD(+) + 4 H(+)(out). NDH-1 shuttles electrons from NADH, via FMN and iron-sulfur (Fe-S) centers, to quinones in the respiratory chain. The immediate electron acceptor for the enzyme in this species is believed to be ubiquinone. Couples the redox reaction to proton translocation (for every two electrons transferred, four hydrogen ions are translocated across the cytoplasmic membrane), and thus conserves the redox energy in a proton gradient. The protein is NADH-quinone oxidoreductase subunit B of Hydrogenobaculum sp. (strain Y04AAS1).